The sequence spans 266 residues: Hemin import ATP-binding protein HmuV (266 aa).

One can recognise an ABC transporter domain in the interval 2 to 242 (IEAVDICVQR…QNLRDVYSCS (241 aa)). 34–41 (GPNGSGKS) contacts ATP.

The protein belongs to the ABC transporter superfamily. Heme (hemin) importer (TC 3.A.1.14.5) family. The complex is composed of two ATP-binding proteins (HmuV), two transmembrane proteins (HmuU) and a solute-binding protein (HmuT).

The protein resides in the cell inner membrane. Its function is as follows. Part of the ABC transporter complex HmuTUV involved in hemin import. Responsible for energy coupling to the transport system. The polypeptide is Hemin import ATP-binding protein HmuV (Bartonella henselae (strain ATCC 49882 / DSM 28221 / CCUG 30454 / Houston 1) (Rochalimaea henselae)).